Reading from the N-terminus, the 623-residue chain is MSLSIKELYYTKDKSINNVNLADGNYVVNRGDGWILSRQNQNLGGNISNNGCTAIVGDLRIRETATPYYYPTASFNEEYIRNNVQNVFANFTEASEIPIGFEFSKTAPSNKGLYMYLQYTYIRYEIIKVLRNTVIERAVLYVPSLGYAKSIEFNSGEQIDKNFYFTSEDKCILNEKFIYKKIAETTTAKESNDSNNTTNLNTSQTILPYPNGLYVINKGDGYMRTNDKDLIGTLLIETNTSGSIIQPRLRNTTRPLFNTSNPTLFSQEYTEARLNDAFNIQLFNTSTTLFKFVEEAPDNKNISMKAYNTYEKYELINYQNGNIADKAEYYLPSLGKCEVSDAPSPQAPVVETPVEQDGFIQTGPNENIIVGVINPSENIEEISTPIPDDYTYNIPTSIQNNACYVLFTVNTTGVYKINAQNNLPPLIIYESIGSDNMNIQSNTLSNNNIKAINYITGTDSSNAESYLIVSLIKNKNYYIRIPQISSSTTNQLIFKRELGNISDLANSTVNILDNLNTSGTHYYTRQSPDVGNYISYQLTIPGDFNNIASSIFSFRTRNNQGIGTLYRLTESINGYNLITIKNYSDLLNNVEPISLLNGATYIFRVKVTELNNYNIIFDAYRNS.

In terms of assembly, botulinum toxins are produced as large progenitor toxins of 12S (M toxin, about 280 kDa) and 16S (L toxin, about 650 kDa). M toxin consists of a non-toxic, non-hemagglutinin component (NTNHA) and the neurotoxin (BoNT/D). L toxin consists of the M toxin and the 3 hemagglutinin (HA) subcomponents of 70, 33, and 17 kDa. The stoichiometry of the whole complex has been modeled as one BoNT/D, one NTNHA, three HA-70, six HA-33 and three HA-17. HA-33 and HA-17 crystallize as a heterotrimer with two HA-33 and one HA-17. In terms of processing, limited treatment of L toxin with pepsin or trypsin produces shorter HA-70 proteins (called HA-55, HA-23 and HA-22) sometimes observed in vivo in other strains of type C and D botulinum toxin preparations.

The protein localises to the secreted. The hemagglutinin (HA) component of the progenitor toxin protects the structural integrity of the neurotoxin; may increase internalization of the neurotoxin into the bloodstream of the host. Involved in binding to the small intestine through interactions with glycolipids and glycoproteins containing sialic acid moieties. Erythrocyte agglutination only occurs when the entire complex is assembled. This HA subunit probably connects toxin/NTNHA to HA-33 and HA-17, the other components of the HA complex, and it may also protect the M toxin from proteolysis upon secretion. This is Hemagglutinin component HA-70 type D from Clostridium botulinum D phage (Clostridium botulinum D bacteriophage).